The sequence spans 457 residues: Argininosuccinate lyase (457 aa).

The protein belongs to the lyase 1 family. Argininosuccinate lyase subfamily.

It is found in the cytoplasm. The catalysed reaction is 2-(N(omega)-L-arginino)succinate = fumarate + L-arginine. Its pathway is amino-acid biosynthesis; L-arginine biosynthesis; L-arginine from L-ornithine and carbamoyl phosphate: step 3/3. In Shewanella sediminis (strain HAW-EB3), this protein is Argininosuccinate lyase.